We begin with the raw amino-acid sequence, 416 residues long: UDP-N-acetylglucosamine 1-carboxyvinyltransferase (416 aa).

A phosphoenolpyruvate-binding site is contributed by 22–23 (KN). Residue Arg-91 participates in UDP-N-acetyl-alpha-D-glucosamine binding. Catalysis depends on Cys-115, which acts as the Proton donor. A 2-(S-cysteinyl)pyruvic acid O-phosphothioketal modification is found at Cys-115. UDP-N-acetyl-alpha-D-glucosamine-binding positions include 120 to 124 (RPIDL), Asp-305, and Ile-327.

This sequence belongs to the EPSP synthase family. MurA subfamily.

Its subcellular location is the cytoplasm. It catalyses the reaction phosphoenolpyruvate + UDP-N-acetyl-alpha-D-glucosamine = UDP-N-acetyl-3-O-(1-carboxyvinyl)-alpha-D-glucosamine + phosphate. It functions in the pathway cell wall biogenesis; peptidoglycan biosynthesis. Its function is as follows. Cell wall formation. Adds enolpyruvyl to UDP-N-acetylglucosamine. The protein is UDP-N-acetylglucosamine 1-carboxyvinyltransferase of Buchnera aphidicola subsp. Acyrthosiphon pisum (strain Tuc7).